The sequence spans 731 residues: MSSSLKIASTQEARQYFDTDRVVVDAVGSDFTDVGAVIAMDYETDVIDAADATKFGIPVFAVTKDAQAISADELKKIFHIIDLENKFDATVNAREIETAVNNYEDSILPPFFKSLKEYVSRGLIQFDCPGHQGGQYYRKHPAGREFYDFFGETVFRADLCNADVALGDLLIHEGPAVAAEKHAARVYNADKTYFVLGGSSNANNTVTSALVSNGDLVLFDRNNHKSVYNSALAMAGGRPVYLQTNRNPYGFIGGIYDSDFDEKKIRELAAKVDPERAKWKRPFRLAVIQLGTYDGTIYNAHEVVKRIGHLCDYIEFDSAWVGYEQFIPMMRNSSPLLIDDLGPEDPGIIVVQSVHKQQAGFSQTSQIHKKDSHIKGQLRYCDHKHFNNSFNLFMSTSPFYPMYAALDVNAAMQEGEAGRKLWHDLLITTIEARKKLIKAGSMFRPFVPPVVNGKKWEDGDTEDMANNIDYWRFEKGAKWHAYEGYGDNQYYVDPNKFMLTTPGINPETGDYEDFGVPATIVANYLRDHGIIPEKSDLNSILFLMTPAETPAKMNNLITQLLQLQRLIEEDAPLKQVLPSIYAANEERYNGYTIRELCQELHDFYKNNNTFTYQKRLFLREFFPEQGMLPYEARQEFIRNHNKLVPLNKIEGEIALEGALPYPPGVFCVAPGEKWSETAVKYFTILQDGINNFPGFAPEIQGVYFKQEGDKVVAYGEVYDAEVAKNDDRYNN.

The residue at position 356 (K356) is an N6-(pyridoxal phosphate)lysine.

Belongs to the Orn/Lys/Arg decarboxylase class-I family. In terms of assembly, dodecamer. It depends on pyridoxal 5'-phosphate as a cofactor.

It carries out the reaction L-ornithine + H(+) = putrescine + CO2. This chain is Inducible ornithine decarboxylase (odcI), found in Lactobacillus sp. (strain 30a).